The following is a 126-amino-acid chain: Aspartate 1-decarboxylase (126 aa).

The Schiff-base intermediate with substrate; via pyruvic acid role is filled by Ser-25. At Ser-25 the chain carries Pyruvic acid (Ser). A substrate-binding site is contributed by Thr-57. Tyr-58 acts as the Proton donor in catalysis. 73–75 (GAA) contacts substrate.

Belongs to the PanD family. In terms of assembly, heterooctamer of four alpha and four beta subunits. Pyruvate serves as cofactor. In terms of processing, is synthesized initially as an inactive proenzyme, which is activated by self-cleavage at a specific serine bond to produce a beta-subunit with a hydroxyl group at its C-terminus and an alpha-subunit with a pyruvoyl group at its N-terminus.

The protein resides in the cytoplasm. It catalyses the reaction L-aspartate + H(+) = beta-alanine + CO2. It functions in the pathway cofactor biosynthesis; (R)-pantothenate biosynthesis; beta-alanine from L-aspartate: step 1/1. Its function is as follows. Catalyzes the pyruvoyl-dependent decarboxylation of aspartate to produce beta-alanine. This Escherichia coli O6:H1 (strain CFT073 / ATCC 700928 / UPEC) protein is Aspartate 1-decarboxylase.